We begin with the raw amino-acid sequence, 357 residues long: DNA integrity scanning protein DisA (357 aa).

One can recognise a DAC domain in the interval 8–146 (VKSMINILQL…GNLRYTLKDI (139 aa)). Residues Gly75, Leu93, and 106-110 (MRHRT) each bind ATP.

It belongs to the DisA family. In terms of assembly, homooctamer. Mg(2+) is required as a cofactor.

The enzyme catalyses 2 ATP = 3',3'-c-di-AMP + 2 diphosphate. Functionally, participates in a DNA-damage check-point that is active prior to asymmetric division when DNA is damaged. DisA forms globular foci that rapidly scan along the chromosomes during sporulation, searching for lesions. When a lesion is present, DisA pauses at the lesion site. This triggers a cellular response that culminates in a temporary block in sporulation initiation. Also has diadenylate cyclase activity, catalyzing the condensation of 2 ATP molecules into cyclic di-AMP (c-di-AMP). c-di-AMP acts as a signaling molecule that couples DNA integrity with progression of sporulation. The rise in c-di-AMP level generated by DisA while scanning the chromosome, operates as a positive signal that advances sporulation; upon encountering a lesion, the DisA focus arrests at the damaged site and halts c-di-AMP synthesis. This chain is DNA integrity scanning protein DisA, found in Bacillus cereus (strain ATCC 14579 / DSM 31 / CCUG 7414 / JCM 2152 / NBRC 15305 / NCIMB 9373 / NCTC 2599 / NRRL B-3711).